Reading from the N-terminus, the 385-residue chain is AA13 family lytic polysaccharide monooxygenase NCU08746 (385 aa).

The first 18 residues, 1-18 (MKFSIISVALASAITVDA), serve as a signal peptide directing secretion. H19 provides a ligand contact to Cu(2+). Position 19 is a methylhistidine (H19). In terms of domain architecture, Chitin-binding type-4 spans 19 to 248 (HGYLTIPFSR…AQVYLSCADI (230 aa)). Cysteines 40 and 43 form a disulfide. N-linked (GlcNAc...) asparagine glycosylation is present at N54. Disulfide bonds link C66/C245, C102/C203, C118/C145, C153/C161, C167/C173, and C181/C192. H109 lines the Cu(2+) pocket. Y242 lines the Cu(2+) pocket. Residues 278 to 385 (CTPAATVAVT…ESVAVESSWK (108 aa)) enclose the CBM20 domain. The N-linked (GlcNAc...) asparagine glycan is linked to N365.

It belongs to the polysaccharide monooxygenase AA13 family. It depends on Cu(2+) as a cofactor.

It localises to the secreted. It catalyses the reaction starch + reduced acceptor + O2 = D-glucono-1,5-lactone-terminated malto-oligosaccharides + short-chain malto-oligosaccharides + acceptor + H2O.. In terms of biological role, starch-active lytic polysaccharide monooxygenase that oxidizes the C1 position of starch substrates, but not in cellulose or chitin. Catalysis by LPMOs requires the reduction of the active-site copper from Cu(II) to Cu(I) by a reducing agent and H(2)O(2) or O(2) as a cosubstrate. The sequence is that of AA13 family lytic polysaccharide monooxygenase NCU08746 from Neurospora crassa (strain ATCC 24698 / 74-OR23-1A / CBS 708.71 / DSM 1257 / FGSC 987).